The sequence spans 547 residues: uncharacterized protein (547 aa).

The next 12 helical transmembrane spans lie at 33–53 (PTFFFALFSAAYVFIDQIMVI), 107–127 (PLIVLLNAINIFIPLGTGVIF), 145–165 (TGLISTTVFGLITQFLVLSFA), 203–223 (VYILIGLNIIPMLSRLFFYLA), 231–251 (FIAIVPPIANLINILIVFLLV), 263–283 (VAGILGYLINFLAYIIYLIYL), 298–318 (LNKIDFNLLVVVSLIGMASFF), 351–371 (TLLTGPIAISNLASAAIFGLL), 397–417 (TVIICISFGSLIYLLTAVAFG), 432–452 (LDLANYFSLIVQAQVFFVATG), 470–490 (IVSLTHGLFVFIPLLFIFQAI), and 499–519 (VFIWLLTANAALAGLINIAFG).

It is found in the cell membrane. This is an uncharacterized protein from Mycoplasma genitalium (strain ATCC 33530 / DSM 19775 / NCTC 10195 / G37) (Mycoplasmoides genitalium).